We begin with the raw amino-acid sequence, 796 residues long: Cadherin-11 (796 aa).

An N-terminal signal peptide occupies residues 1–22; that stretch reads MKENYCLQAALVCLGMLCHSHA. The propeptide occupies 23–53; sequence FAPERRGHLRPSFHGHHEKGKEGQVLQRSKR. Cadherin domains are found at residues 54–159, 160–268, 269–383, 384–486, and 487–612; these read GWVW…PPEF, LHET…PPKF, PQSV…PPMF, LAPS…DNAP, and KFAA…YILN. Over 54–617 the chain is Extracellular; it reads GWVWNQFFVI…AYILNAGLST (564 aa). Residues N455 and N540 are each glycosylated (N-linked (GlcNAc...) asparagine). Residues 618–640 traverse the membrane as a helical segment; that stretch reads GALIAILACIVILLVIVVLFVTL. At 641-796 the chain is on the cytoplasmic side; the sequence is RRQKKEPLIV…GSKDTFDDDS (156 aa). Phosphoserine is present on S788. A Phosphothreonine modification is found at T791.

As to quaternary structure, interacts with PCDH8. Expressed mainly in brain but also found in other tissues. Expressed in neuroblasts. In the embryo from 67 to 72 days of gestation, detected at high levels in facial mesenchyme including the central palatal mesenchyme, dental mesenchyme, the eye and optic muscle, and the tongue (at protein level).

The protein resides in the cell membrane. Cadherins are calcium-dependent cell adhesion proteins. They preferentially interact with themselves in a homophilic manner in connecting cells; cadherins may thus contribute to the sorting of heterogeneous cell types. Required for proper focal adhesion assembly. Involved in the regulation of cell migration. This Homo sapiens (Human) protein is Cadherin-11 (CDH11).